Here is a 335-residue protein sequence, read N- to C-terminus: 2-acylglycerol O-acyltransferase 1 (335 aa).

Transmembrane regions (helical) follow at residues 24–44 (WLLS…FLII) and 104–124 (YIFG…NFCT). N-linked (GlcNAc...) asparagine glycosylation is found at Asn-125 and Asn-180.

It belongs to the diacylglycerol acyltransferase family.

It is found in the endoplasmic reticulum membrane. It catalyses the reaction a 2-acylglycerol + an acyl-CoA = a 1,2-diacylglycerol + CoA. The enzyme catalyses 2-(9Z-octadecenoyl)-glycerol + butanoyl-CoA = 1-butanoyl-2-(9Z-octadecenoyl)-glycerol + CoA. The catalysed reaction is 2-(9Z-octadecenoyl)-glycerol + octanoyl-CoA = 1-octanoyl-2-(9Z-octadecenoyl)-glycerol + CoA. It carries out the reaction 2-(9Z-octadecenoyl)-glycerol + dodecanoyl-CoA = 1-dodecanoyl-2-(9Z-octadecenoyl)-glycerol + CoA. It catalyses the reaction 2-(9Z-octadecenoyl)-glycerol + tetradecanoyl-CoA = 1-tetradecanoyl-2-(9Z-octadecenoyl)-glycerol + CoA. The enzyme catalyses 2-(9Z-octadecenoyl)-glycerol + hexadecanoyl-CoA = 1-hexadecanoyl-2-(9Z-octadecenoyl)-glycerol + CoA. The catalysed reaction is 2-(9Z-octadecenoyl)-glycerol + octadecanoyl-CoA = 1-octadecanoyl-2-(9Z-octadecenoyl)-glycerol + CoA. It carries out the reaction eicosanoyl-CoA + 2-(9Z-octadecenoyl)-glycerol = 1-eicosanoyl-2-(9Z-octadecenoyl)-glycerol + CoA. It catalyses the reaction 2-(9Z-octadecenoyl)-glycerol + (9Z)-octadecenoyl-CoA = 1,2-di-(9Z-octadecenoyl)-glycerol + CoA. The enzyme catalyses 2-(9Z-octadecenoyl)-glycerol + (9Z,12Z)-octadecadienoyl-CoA = 1-(9Z,12Z-octadecadienoyl)-2-(9Z-octadecenoyl)-glycerol + CoA. The catalysed reaction is 2-(9Z-octadecenoyl)-glycerol + (5Z,8Z,11Z,14Z)-eicosatetraenoyl-CoA = 1-(5Z,8Z,11Z,14Z-eicosatetraenoyl)-2-(9Z-octadecenoyl)-glycerol + CoA. It carries out the reaction a 2-acylglycerol + an acyl-CoA = a 1,2-diacyl-sn-glycerol + CoA. It catalyses the reaction a 2-acylglycerol + an acyl-CoA = a 2,3-diacyl-sn-glycerol + CoA. The enzyme catalyses a 1-acylglycerol + an acyl-CoA = a 1,2-diacylglycerol + CoA. The catalysed reaction is 1-dodecanoylglycerol + (9Z)-octadecenoyl-CoA = 1-dodecanoyl-2-(9Z-octadecenoyl)-glycerol + CoA. It carries out the reaction 1-tetradecanoylglycerol + (9Z)-octadecenoyl-CoA = 1-tetradecanoyl-2-(9Z-octadecenoyl)-glycerol + CoA. It catalyses the reaction 1-hexadecanoylglycerol + (9Z)-octadecenoyl-CoA = 1-hexadecanoyl-2-(9Z-octadecenoyl)-glycerol + CoA. The enzyme catalyses 1-(9Z-octadecenoyl)-glycerol + (9Z)-octadecenoyl-CoA = 1,2-di-(9Z-octadecenoyl)-glycerol + CoA. The catalysed reaction is 1-(9Z,12Z-octadecadienoyl)-glycerol + (9Z)-octadecenoyl-CoA = 1-(9Z,12Z-octadecadienoyl)-2-(9Z-octadecenoyl)-glycerol + CoA. It carries out the reaction 1-(9Z,12Z,15Z-octadecatrienoyl)-glycerol + (9Z)-octadecenoyl-CoA = 1-(9Z,12Z,15Z-octadecatrienoyl)-2-(9Z-octadecenoyl)-glycerol + CoA. It catalyses the reaction 1-(5Z,8Z,11Z,14Z-eicosatetraenoyl)-glycerol + (9Z)-octadecenoyl-CoA = 1-(5Z,8Z,11Z,14Z-eicosatetraenoyl)-2-(9Z-octadecenoyl)-glycerol + CoA. The enzyme catalyses a 1-acylglycerol + an acyl-CoA = a 1,3-diacylglycerol + CoA. The catalysed reaction is 1-dodecanoylglycerol + (9Z)-octadecenoyl-CoA = 1-dodecanoyl-3-(9Z-octadecenoyl)-glycerol + CoA. It carries out the reaction 1-hexadecanoylglycerol + (9Z)-octadecenoyl-CoA = 1-(9Z-octadecenoyl)-3-hexadecanoylglycerol + CoA. It catalyses the reaction 1-octadecanoylglycerol + (9Z)-octadecenoyl-CoA = 1-octadecanoyl-3-(9Z-octadecenoyl)-glycerol + CoA. The enzyme catalyses 1-(9Z-octadecenoyl)-sn-glycerol + (9Z)-octadecenoyl-CoA = 1,3-di-(9Z-octadecenoyl)-glycerol + CoA. The catalysed reaction is 1-(9Z,12Z-octadecadienoyl)-glycerol + (9Z)-octadecenoyl-CoA = 1-(9Z-octadecenoyl)-3-(9Z,12Z-octadecadienoyl)-glycerol + CoA. It carries out the reaction 1-(9Z,12Z,15Z-octadecatrienoyl)-glycerol + (9Z)-octadecenoyl-CoA = 1-(9Z,12Z,15Z-octadecatrienoyl)-3-(9Z-octadecenoyl)-glycerol + CoA. It catalyses the reaction a 1-acyl-sn-glycerol + an acyl-CoA = a 1,3-diacyl-sn-glycerol + CoA. The enzyme catalyses a 3-acyl-sn-glycerol + an acyl-CoA = a 1,3-diacyl-sn-glycerol + CoA. The catalysed reaction is 3-octadecanoyl-sn-glycerol + (9Z)-octadecenoyl-CoA = 1-(9Z-octadecenoyl)-3-octadecanoyl-sn-glycerol + CoA. It participates in glycerolipid metabolism; triacylglycerol biosynthesis. In terms of biological role, involved in glycerolipid synthesis and lipid metabolism. Catalyzes the formation of diacylglycerol, the precursor of triacylglycerol, by transferring the acyl chain of a fatty acyl-CoA to a monoacylglycerol, mainly at the sn-1 or sn-3 positions. It uses both sn-2-monoacylglycerol (2-acylglycerol) and sn-1-monoacylglycerol (1-acyl-sn-glycerol) equally well as substrates, and uses sn-3-monoacylglycerol (3-acyl-sn-glycerol) with lower efficiency. Probably not involved in absorption of dietary fat in the small intestine. In Bos taurus (Bovine), this protein is 2-acylglycerol O-acyltransferase 1 (MOGAT1).